We begin with the raw amino-acid sequence, 194 residues long: Small ribosomal subunit protein uS7 (194 aa).

Belongs to the universal ribosomal protein uS7 family. In terms of assembly, part of the 30S ribosomal subunit.

One of the primary rRNA binding proteins, it binds directly to 16S rRNA where it nucleates assembly of the head domain of the 30S subunit. Is located at the subunit interface close to the decoding center. This chain is Small ribosomal subunit protein uS7, found in Archaeoglobus fulgidus (strain ATCC 49558 / DSM 4304 / JCM 9628 / NBRC 100126 / VC-16).